The chain runs to 195 residues: MSKQEKSNVEDKSLDIETAAQVETAQESASGALEELSVEEQLERAKDTIKELEDSCDQFKDEALRAKAEMENIRKRAERDVSNARKFGIEKFAKELLPVIDSIEQALKHEVKLEEAIAMKEGIELTAKMLVDILKKNGVEELHPKGEKFDPNLHEAMAMIPNPEFEDNTIFDVFQKGYMLNGRIVRAAKVVIVKN.

The protein belongs to the GrpE family. As to quaternary structure, homodimer.

It is found in the cytoplasm. In terms of biological role, participates actively in the response to hyperosmotic and heat shock by preventing the aggregation of stress-denatured proteins, in association with DnaK and GrpE. It is the nucleotide exchange factor for DnaK and may function as a thermosensor. Unfolded proteins bind initially to DnaJ; upon interaction with the DnaJ-bound protein, DnaK hydrolyzes its bound ATP, resulting in the formation of a stable complex. GrpE releases ADP from DnaK; ATP binding to DnaK triggers the release of the substrate protein, thus completing the reaction cycle. Several rounds of ATP-dependent interactions between DnaJ, DnaK and GrpE are required for fully efficient folding. This Francisella tularensis subsp. novicida (strain U112) protein is Protein GrpE.